A 263-amino-acid polypeptide reads, in one-letter code: Small ribosomal subunit protein eS1 (263 aa).

The tract at residues 235 to 263 (HGEGGGGKGEAGDKSERPEGYEPPVQESV) is disordered. Residues 244–254 (EAGDKSERPEG) are compositionally biased toward basic and acidic residues.

This sequence belongs to the eukaryotic ribosomal protein eS1 family. Component of the small ribosomal subunit. Mature ribosomes consist of a small (40S) and a large (60S) subunit. The 40S subunit contains about 33 different proteins and 1 molecule of RNA (18S). The 60S subunit contains about 49 different proteins and 3 molecules of RNA (28S, 5.8S and 5S).

The protein localises to the cytoplasm. The sequence is that of Small ribosomal subunit protein eS1 from Bombyx mori (Silk moth).